Consider the following 359-residue polypeptide: 3-dehydroquinate synthase (359 aa).

NAD(+)-binding positions include 72-77 (EGEIHK), 106-110 (GVIGD), 130-131 (TS), Lys143, Lys152, and 170-173 (CLKT). Glu185, His248, and His264 together coordinate Zn(2+).

Belongs to the sugar phosphate cyclases superfamily. Dehydroquinate synthase family. Co(2+) serves as cofactor. It depends on Zn(2+) as a cofactor. The cofactor is NAD(+).

It localises to the cytoplasm. It carries out the reaction 7-phospho-2-dehydro-3-deoxy-D-arabino-heptonate = 3-dehydroquinate + phosphate. Its pathway is metabolic intermediate biosynthesis; chorismate biosynthesis; chorismate from D-erythrose 4-phosphate and phosphoenolpyruvate: step 2/7. In terms of biological role, catalyzes the conversion of 3-deoxy-D-arabino-heptulosonate 7-phosphate (DAHP) to dehydroquinate (DHQ). This Dehalococcoides mccartyi (strain ATCC BAA-2100 / JCM 16839 / KCTC 5957 / BAV1) protein is 3-dehydroquinate synthase.